A 72-amino-acid chain; its full sequence is DNA-directed RNA polymerase subunit Rpo10 (72 aa).

Residues Cys7, Cys10, Cys53, and Cys54 each coordinate Zn(2+).

It belongs to the archaeal Rpo10/eukaryotic RPB10 RNA polymerase subunit family. In terms of assembly, part of the RNA polymerase complex. It depends on Zn(2+) as a cofactor.

The protein resides in the cytoplasm. It catalyses the reaction RNA(n) + a ribonucleoside 5'-triphosphate = RNA(n+1) + diphosphate. Its function is as follows. DNA-dependent RNA polymerase (RNAP) catalyzes the transcription of DNA into RNA using the four ribonucleoside triphosphates as substrates. This Thermoplasma acidophilum (strain ATCC 25905 / DSM 1728 / JCM 9062 / NBRC 15155 / AMRC-C165) protein is DNA-directed RNA polymerase subunit Rpo10.